A 735-amino-acid chain; its full sequence is Glycogen [starch] synthase, muscle (735 aa).

Ser8 is subject to Phosphoserine; by AMPK and PKA. Phosphoserine is present on Ser11. UDP is bound at residue Lys39. Residues His205 and Arg211 each contribute to the UDP-alpha-D-glucose site. Alpha-D-glucose 6-phosphate is bound by residues His291, Glu292, Gln294, His297, and Lys301. UDP is bound at residue Arg331. Arg331 lines the UDP-alpha-D-glucose pocket. The residue at position 412 (Ser412) is a Phosphoserine. His501 is an alpha-D-glucose 6-phosphate binding site. Residues Glu510, Trp512, and Gly513 each contribute to the UDP-alpha-D-glucose site. Thr515 is a UDP binding site. The alpha-D-glucose 6-phosphate site is built by Arg582 and Arg586. Residues 629–735 are disordered; the sequence is DATQGYRYPR…PASSLGEERN (107 aa). Position 641 is a phosphoserine; by DYRK2, GSK3-alpha, GSK3-beta and PASK (Ser641). Ser645 and Ser649 each carry phosphoserine; by GSK3-alpha and GSK3-beta. Phosphoserine is present on Ser652. Ser653 carries the phosphoserine; by GSK3-alpha and GSK3-beta modification. Ser657 carries the phosphoserine; by CK2 modification. Residues 658–681 are compositionally biased toward acidic residues; that stretch reads EDEEEPRDGLPEEDGERYDEDEEA. Positions 682–695 are enriched in basic and acidic residues; the sequence is AKDRRNIRAPEWPR. At Ser698 the chain carries Phosphoserine. Low complexity predominate over residues 698–735; sequence SCTSSSGGSKRSNSVDTSSLSTPSEPLSPASSLGEERN. Thr700 is modified (phosphothreonine). Ser709 and Ser711 each carry phosphoserine. A Phosphothreonine modification is found at Thr719. A phosphoserine mark is found at Ser725 and Ser729.

The protein belongs to the glycosyltransferase 3 family. As to quaternary structure, part of the GYS1-GYG1 complex, a heterooctamer composed of a tetramer of GYS1 and 2 dimers of GYG1, where each GYS1 protomer binds to one GYG1 subunit (via GYG1 C-terminus); the GYS1 tetramer may dissociate from GYG1 dimers to continue glycogen polymerization on its own. In terms of processing, phosphorylation at Ser-8 is required for modification of Ser-11 by casein kinase I. Post-translationally, phosphorylated at Ser-641 by PASK, leading to inactivation; phosphorylation by PASK is inhibited by glycogen. Dephosphorylation at Ser-641 and Ser-645 by PP1 activates the enzyme. Phosphorylation at Ser-8 by AMPK inactivates the enzyme activity. Phosphorylated at Ser-641 by DYRK2, leading to inactivation. Primed phosphorylation at Ser-657 (site 5) by CSNK2A1 and CSNK2A2 is required for inhibitory phosphorylation at Ser-641 (site 3a), Ser-645 (site 3b), Ser-649 (site 3c) and Ser-653 (site 4) by GSK3A and GSK3B.

The enzyme catalyses [(1-&gt;4)-alpha-D-glucosyl](n) + UDP-alpha-D-glucose = [(1-&gt;4)-alpha-D-glucosyl](n+1) + UDP + H(+). It participates in glycan biosynthesis; glycogen biosynthesis. With respect to regulation, allosteric activation by glucose-6-phosphate. Phosphorylation reduces the activity towards UDP-glucose. When in the non-phosphorylated state, glycogen synthase does not require glucose-6-phosphate as an allosteric activator; when phosphorylated it does. Its function is as follows. Glycogen synthase participates in the glycogen biosynthetic process along with glycogenin and glycogen branching enzyme. Extends the primer composed of a few glucose units formed by glycogenin by adding new glucose units to it. In this context, glycogen synthase transfers the glycosyl residue from UDP-Glc to the non-reducing end of alpha-1,4-glucan. The chain is Glycogen [starch] synthase, muscle from Oryctolagus cuniculus (Rabbit).